Consider the following 190-residue polypeptide: Large ribosomal subunit protein bL9 (190 aa).

Belongs to the bacterial ribosomal protein bL9 family.

Functionally, binds to the 23S rRNA. This is Large ribosomal subunit protein bL9 from Methylorubrum extorquens (strain CM4 / NCIMB 13688) (Methylobacterium extorquens).